The primary structure comprises 52 residues: AKVLTLDLYKKLRDKSTPSGFTLDDIIQNEHLGYVLTCPSNLGTXLRAXVHV.

The Phosphagen kinase C-terminal domain maps to 1-52; that stretch reads AKVLTLDLYKKLRDKSTPSGFTLDDIIQNEHLGYVLTCPSNLGTXLRAXVHV. The region spanning 1–52 is the Phosphagen kinase N-terminal domain; sequence AKVLTLDLYKKLRDKSTPSGFTLDDIIQNEHLGYVLTCPSNLGTXLRAXVHV. Arginine 13 and arginine 47 together coordinate ATP.

Belongs to the ATP:guanido phosphotransferase family. In terms of assembly, dimer of identical or non-identical chains, which can be either B (brain type) or M (muscle type). With MM being the major form in skeletal muscle and myocardium, MB existing in myocardium, and BB existing in many tissues, especially brain. As to expression, expressed in rectal gland, brain, skeletal muscle (at protein level).

It localises to the cytoplasm. It is found in the cytosol. The protein localises to the mitochondrion. The protein resides in the basal cell membrane. It catalyses the reaction creatine + ATP = N-phosphocreatine + ADP + H(+). Reversibly catalyzes the transfer of phosphate between ATP and various phosphogens (e.g. creatine phosphate). Creatine kinase isoenzymes play a central role in energy transduction in tissues with large, fluctuating energy demands, such as skeletal muscle, heart, brain and spermatozoa. The chain is Creatine kinase B-type from Squalus acanthias (Spiny dogfish).